We begin with the raw amino-acid sequence, 423 residues long: FAD-dependent monooxygenase asL6 (423 aa).

Residues 10-13 (AGVA), 34-35 (ER), R108, Y290, and D312 each bind FAD. Residues 371–391 (GMGMFQSKFGVGVFYVLLAII) form a helical membrane-spanning segment.

This sequence belongs to the aromatic-ring hydroxylase family. It depends on FAD as a cofactor.

Its subcellular location is the membrane. It functions in the pathway secondary metabolite biosynthesis; terpenoid biosynthesis. FAD-dependent monooxygenase; part of the gene cluster that mediates the biosynthesis of xenovulene A, an unusual meroterpenoid that has potent inhibitory effects on the human gamma-aminobutyrate A (GABAA) benzodiazepine receptor. The first step of xenovulene A biosynthesis is the biosynthesis of 3-methylorcinaldehyde performed by the non-reducing polyketide synthase aspks1. The salicylate hydroxylase asL1 then catalyzes the oxidative dearomatization of 3-methylorcinaldehyde to yield a dearomatized hydroxycyclohexadione. The 2-oxoglutarate-dependent dioxygenase asL3 further catalyzes the oxidative ring expansion to provide the first tropolone metabolite. The cytochrome P450 monooxygenase asR2 allows the synthesis of tropolone hemiacetal. In parallel, a previously unrecognised class of terpene cyclase, asR6, produces alpha-humulene from farnesylpyrophosphate (FPP). The putative Diels-Alderase asR5 probably catalyzes the formation of the tropolone-humulene skeleton by linking humulene and the polyketide moiety. Oxidative-ring contractions catalyzed by asL4 and asL6 then processively remove carbon atoms from the polyketide to yield xenovulene A. In Sarocladium schorii (Acremonium strictum (strain IMI 501407)), this protein is FAD-dependent monooxygenase asL6.